The primary structure comprises 637 residues: Transmembrane 9 superfamily member 10 (637 aa).

The N-terminal stretch at 1–23 (MAKVRILIFTLVLFFSLNVHIHG) is a signal peptide. At 24 to 274 (FYLPGVAPQD…YLLMADDQIH (251 aa)) the chain is on the lumenal side. A helical transmembrane segment spans residues 275 to 295 (WFSIVNSMMIVLFLSGMVAMI). At 296–344 (MLRTLYRDISNYNQLESHEEALEETGWKLVHGDVFRPPTNPELLCVYAG) the chain is on the cytoplasmic side. Residues 345–365 (TGVQCFGMILVTMIFACLGFL) form a helical membrane-spanning segment. Residues 366 to 370 (SPSNR) lie on the Lumenal side of the membrane. Residues 371 to 391 (GGLMTAMLLLWVFMGLLAGYA) form a helical membrane-spanning segment. Residues 392–411 (SSRLYKTLRGTEWKRNALKT) are Cytoplasmic-facing. The helical transmembrane segment at 412–432 (AFMFPATVFVAFFVLNAIIWG) threads the bilayer. Over 433-444 (QKSSGAVPFGTM) the chain is Lumenal. A helical transmembrane segment spans residues 445 to 465 (FALVVLWFGISVPLVFIGGYI). Residues 466-494 (GFRKPAPEDPVKTNKIPRQIPTQAWYMNP) lie on the Cytoplasmic side of the membrane. Residues 495–515 (IFSILIGGILPFGAVFIELFF) form a helical membrane-spanning segment. The Lumenal portion of the chain corresponds to 516–527 (ILTSIWLHQFYY). Residues 528–548 (IFGFLFIVFIILIITCAEITV) form a helical membrane-spanning segment. At 549-566 (VLCYFQLCSEDYQWWWRS) the chain is on the cytoplasmic side. Residues 567 to 587 (YLTSGSSAVYLFLYAVFYFYT) form a helical membrane-spanning segment. The Lumenal segment spans residues 588–593 (KLEITK). A helical membrane pass occupies residues 594–614 (LVSAVLYFGYMLIVSYVFFVF). Residues 615-637 (TGAIGFYACFWFTRLIYSSVKID) lie on the Cytoplasmic side of the membrane. Residues 626-631 (FTRLIY) carry the Endoplasmic reticulum export signal motif. The short motif at 635-637 (KID) is the Golgi retention signal element.

The protein belongs to the nonaspanin (TM9SF) (TC 9.A.2) family.

It is found in the endosome membrane. The protein resides in the golgi apparatus membrane. This chain is Transmembrane 9 superfamily member 10, found in Arabidopsis thaliana (Mouse-ear cress).